The following is a 675-amino-acid chain: Protein brown (675 aa).

The Cytoplasmic portion of the chain corresponds to 1–419 (MQESGGSSGQ…TEDLRNIRSG (419 aa)). In terms of domain architecture, ABC transporter spans 34–261 (YSFWNECRKK…EVVAESHESL (228 aa)). Residue 66-73 (GGSGAGKT) coordinates ATP. Residues 229 to 249 (EDSFETPSGESSASGSGSKSI) are disordered. Over residues 236–248 (SGESSASGSGSKS) the composition is skewed to low complexity. Residues 420 to 440 (LIAFGFFMITAVTLSLMYSGI) form a helical membrane-spanning segment. The Extracellular portion of the chain corresponds to 441–460 (GGLTQRTVQDVGGSIFMLSN). A helical transmembrane segment spans residues 461-481 (EMIFTFSYGVTYIFPAALPII). Residues 482-497 (RREVGEGTYSLSAYYV) lie on the Cytoplasmic side of the membrane. The chain crosses the membrane as a helical span at residues 498-518 (ALVLSFVPVAFFKGYVFLSVI). Residues 519–531 (YASIYYTRGFLLY) are Extracellular-facing. The chain crosses the membrane as a helical span at residues 532-552 (LSMGFLMSLSAVAAVGYGVFL). Residues 553 to 568 (SSLFESDKMASECAAP) are Cytoplasmic-facing. The chain crosses the membrane as a helical span at residues 569–589 (FDLIFLIFGGTYMNVDTVPGL). Over 590–644 (KYLSLFFYSNEALMYKFWIDIDNIDCPVNEDHPCIKTGVEVLQQGSYRNADYTYW) the chain is Extracellular. The chain crosses the membrane as a helical span at residues 645-665 (LDCFSLVVVAVIFHIVSFGLV). Residues 666-675 (RRYIHRSGYY) are Cytoplasmic-facing.

This sequence belongs to the ABC transporter superfamily. ABCG family. Eye pigment precursor importer (TC 3.A.1.204) subfamily. May form a heterodimer with w/white.

The protein localises to the membrane. It catalyses the reaction guanine(out) + ATP + H2O = guanine(in) + ADP + phosphate + H(+). The enzyme catalyses riboflavin(in) + ATP + H2O = riboflavin(out) + ADP + phosphate + H(+). It carries out the reaction (6S)-5,6,7,8-tetrahydrofolate(out) + ATP + H2O = (6S)-5,6,7,8-tetrahydrofolate(in) + ADP + phosphate + H(+). Functionally, ATP-dependent transporter of the ATP-binding cassette (ABC) family which transports various molecules including bioamines, neurotransmitters and metabolic intermediates. In the eye and probably in association with w/white, required for the transport of the eye red pigment precursor, guanine, into pigment cell granules. In Malpighian tubules, involved in guanine uptake. Probably in association with w/white, involved in aging-induced intestinal stem cell proliferation in the midgut by regulating tetrahydrofolate transport. This chain is Protein brown, found in Drosophila melanogaster (Fruit fly).